A 519-amino-acid chain; its full sequence is Transcription factor STP1 (519 aa).

The segment at 16 to 35 is i; the sequence is IPGKIYAFFRELVSGVIISK. The segment covering 47–61 has biased composition (basic and acidic residues); sequence ATKEEGKDAADEEKT. 2 disordered regions span residues 47–69 and 115–150; these read ATKE…FPES and LLGS…EHST. The tract at residues 65–97 is II; that stretch reads LFPESNNIDRSLNGGCSVIPCSMDVSDLNTPIS. The segment covering 131–146 has biased composition (low complexity); the sequence is STGVTSSPLSPSGSTP. A C2H2-type 1 zinc finger spans residues 160–182; that stretch reads FICHYCDATFRIRGYLTRHIKKH. The C2H2-type 2; atypical zinc finger occupies 188 to 223; sequence YHCPFFNSATPPDLRCHNSGGFSRRDTYKTHLKARH. A C2H2-type 3; atypical zinc finger spans residues 240 to 265; that stretch reads GHCAQCGEYFSTIENFVENHIESGDC. Residues 357 to 382 form a disordered region; that stretch reads IKKKQQQVSGSTVTTPEVATQNNQEV. Over residues 364 to 381 the composition is skewed to polar residues; the sequence is VSGSTVTTPEVATQNNQE.

Interacts (via Region II) with SSY5; protease component of the SPS-sensor. Post-translationally, phosphorylated by casein kinase I. Phosphorylation is not dependent on the extracellular amino acid levels, but is a prerequisite for proteolytic processing. Activated by the amino acid-induced proteolytic removal of an N-terminal inhibitory domain by serine protease SSY5, an intrinsic component of the SPS-sensor. Processing requires at least 2 components of the SCF(GRR1) ubiquitin ligase complex, namely the F-box protein GRR1 and the E2 enzyme CDC34, but does not depend on the proteasome. Processing is negatively regulated by the protein phosphatase 2A regulatory subunit RTS1.

It localises to the cell membrane. The protein resides in the nucleus. Transcription factor involved in the regulation of gene expression in response to extracellular amino acid levels. Synthesized as latent cytoplasmic precursor, which, upon a signal initiated by the plasma membrane SPS (SSY1-PTR3-SSY5) amino acid sensor system, becomes proteolytically activated and relocates to the nucleus, where it induces the expression of SPS-sensor-regulated genes, including the amino-acid permeases AGP1, BAP2, BAP3 and GNP1. Binding to promoters is facilitated by DAL81. Involved in the repression of genes subject to nitrogen catabolite repression and genes involved in stress response. Negatively regulated by inner nuclear membrane proteins ASI1, ASI2 and ASI3, which prevent unprocessed precursor forms that escape cytoplasmic anchoring from inducing SPS-sensor-regulated genes. May be involved in pre-tRNA splicing. The polypeptide is Transcription factor STP1 (STP1) (Saccharomyces cerevisiae (strain RM11-1a) (Baker's yeast)).